Reading from the N-terminus, the 288-residue chain is Putative sugar uptake protein gbs2116 (288 aa).

10 helical membrane-spanning segments follow: residues 4-26 (LLIA…KIGG), 33-50 (FGMT…WLFK), 55-72 (TASL…WSVG), 85-107 (VSVA…GALV), 117-134 (FILG…FYFS), 154-171 (FATI…AVLF), 181-200 (AVIL…FMKF), 207-229 (VVVK…LLAA), 234-256 (LAIA…ILFL), and 268-285 (VVMG…LGIV).

The protein belongs to the GRP transporter (TC 2.A.7.5) family.

It is found in the cell membrane. This chain is Putative sugar uptake protein gbs2116, found in Streptococcus agalactiae serotype III (strain NEM316).